Consider the following 272-residue polypeptide: NADPH-dependent aldehyde reductase 2, chloroplastic (272 aa).

Residues 1–53 (MAAASSVSSPPLCLAGRVAIVTGSSRGIGRAIAIHLAELGARVVVNYSTSPVE) constitute a chloroplast transit peptide. 26–50 (RGIGRAIAIHLAELGARVVVNYSTS) contacts NADP(+). Position 165 (S165) interacts with substrate. The Proton acceptor role is filled by Y179.

This sequence belongs to the short-chain dehydrogenases/reductases (SDR) family.

The protein localises to the plastid. The protein resides in the chloroplast. Functionally, aldehyde reductase that catalyzes the reduction of the aldehyde carbonyl groups on saturated and alpha,beta-unsaturated aldehydes with more than 5 carbons. No activity on alpha,beta-unsaturated ketones. Can use propionaldehyde, butyraldehyde, methylglyoxal, (e)-2-pentenal, (E)-2-hexenal, (Z)-3-hexenal and (E)-2-nonenal as substrates, but not propenal (acrolein), crotonaldehyde, 2-butanone, 3-buten-2-one or 1-penten-3-one. The protein is NADPH-dependent aldehyde reductase 2, chloroplastic of Arabidopsis thaliana (Mouse-ear cress).